The chain runs to 323 residues: Macrolide efflux protein A (323 aa).

The next 9 membrane-spanning stretches (helical) occupy residues 6–26 (VLSMSLLGFLPYAVFGPAIGV), 51–71 (LTIVAFYMELPVWMVMIVLFI), 105–125 (SLQSISYIVSPAVAALLYSVW), 128–148 (NAIIAIDVLGAVIASITVLIV), 182–202 (FALLLVGTLYMFVYMPINALF), 219–239 (ITEISFASGMLIGGLLLGLFG), 245–265 (ILLITASIFMMGISLTISGLL), 270–290 (FFIFVVCSAIMGLSVPFYSGV), and 303–323 (YLGRVFSLTGSIMSLAMPIGL).

Belongs to the major facilitator superfamily. Drug:H(+) antiporter-3 (DHA3) (TC 2.A.1.21) family.

The protein localises to the cell membrane. Confers resistance to 14-membered macrolides including erythromycin and to 15-membered macrolides but not to 16-membered macrolides, lincosamides or analogs of streptogramin B. May function as an efflux pump to regulate intracellular macrolide levels. In Enterococcus faecalis (Streptococcus faecalis), this protein is Macrolide efflux protein A (mefA).